The sequence spans 450 residues: Saccharopine dehydrogenase [NADP(+), L-glutamate-forming] (450 aa).

Residues 9–12 (SGFV), 32–34 (CRT), 54–55 (DV), Ile75, 97–98 (TS), 124–126 (VDP), and Ser174 contribute to the NADP(+) site. Residues 98–99 (SY) and Asp125 contribute to the L-saccharopine site. L-saccharopine-binding positions include Arg223 and 244–246 (TLR).

The protein belongs to the saccharopine dehydrogenase family. As to quaternary structure, homodimer.

It is found in the cytoplasm. The enzyme catalyses L-saccharopine + NADP(+) + H2O = (S)-2-amino-6-oxohexanoate + L-glutamate + NADPH + H(+). The protein operates within amino-acid biosynthesis; L-lysine biosynthesis via AAA pathway; L-lysine from L-alpha-aminoadipate (fungal route): step 2/3. The chain is Saccharopine dehydrogenase [NADP(+), L-glutamate-forming] from Schizosaccharomyces pombe (strain 972 / ATCC 24843) (Fission yeast).